Consider the following 237-residue polypeptide: Proteasome subunit beta type-1-B (237 aa).

Belongs to the peptidase T1B family. The 26S proteasome consists of a 20S proteasome core and two 19S regulatory subunits. The 20S proteasome core is composed of 28 subunits that are arranged in four stacked rings, resulting in a barrel-shaped structure. The two end rings are each formed by seven alpha subunits, and the two central rings are each formed by seven beta subunits. The catalytic chamber with the active sites is on the inside of the barrel.

It is found in the cytoplasm. Its subcellular location is the nucleus. Its function is as follows. Non-catalytic component of the proteasome, a multicatalytic proteinase complex which is characterized by its ability to cleave peptides with Arg, Phe, Tyr, Leu, and Glu adjacent to the leaving group at neutral or slightly basic pH. The proteasome has an ATP-dependent proteolytic activity. This chain is Proteasome subunit beta type-1-B (psmb1-B), found in Carassius auratus (Goldfish).